We begin with the raw amino-acid sequence, 190 residues long: Peptidyl-tRNA hydrolase (190 aa).

Phe14 contacts tRNA. The active-site Proton acceptor is the His19. 3 residues coordinate tRNA: Met64, Asn66, and Asn112.

Belongs to the PTH family. As to quaternary structure, monomer.

The protein localises to the cytoplasm. It catalyses the reaction an N-acyl-L-alpha-aminoacyl-tRNA + H2O = an N-acyl-L-amino acid + a tRNA + H(+). Functionally, hydrolyzes ribosome-free peptidyl-tRNAs (with 1 or more amino acids incorporated), which drop off the ribosome during protein synthesis, or as a result of ribosome stalling. In terms of biological role, catalyzes the release of premature peptidyl moieties from peptidyl-tRNA molecules trapped in stalled 50S ribosomal subunits, and thus maintains levels of free tRNAs and 50S ribosomes. This Staphylococcus epidermidis (strain ATCC 35984 / DSM 28319 / BCRC 17069 / CCUG 31568 / BM 3577 / RP62A) protein is Peptidyl-tRNA hydrolase.